Reading from the N-terminus, the 644-residue chain is Exoribonuclease 2 (644 aa).

Residues 189 to 516 (RKDLTALDFV…NHRLLKAVIK (328 aa)) enclose the RNB domain. Residues 561–643 (DTRFAAEIVD…ETRSIIARPV (83 aa)) form the S1 motif domain.

This sequence belongs to the RNR ribonuclease family. RNase II subfamily.

The protein resides in the cytoplasm. The enzyme catalyses Exonucleolytic cleavage in the 3'- to 5'-direction to yield nucleoside 5'-phosphates.. Involved in mRNA degradation. Hydrolyzes single-stranded polyribonucleotides processively in the 3' to 5' direction. This Escherichia coli O157:H7 protein is Exoribonuclease 2.